We begin with the raw amino-acid sequence, 123 residues long: Gamma-synuclein (123 aa).

A run of 2 repeats spans residues 20–30 (EKTKQGVTEAA) and 31–41 (EKTKEGVMYVG). The segment at 20-67 (EKTKQGVTEAAEKTKEGVMYVGTKTKENVVQSVTSVAEKTKEQANAVS) is 4 X 11 AA tandem repeats of [EGSA]-K-T-K-[EQ]-[GQ]-V-X(4). A 3; approximate repeat occupies 42–56 (TKTKENVVQSVTSVA). The stretch at 57–67 (EKTKEQANAVS) is repeat 4. Phosphoserine is present on residues serine 67 and serine 72. A disordered region spans residues 91-123 (TTGVVRKEDLEPPAQDQEAKEQEENEEAKSGED). Residues 107 to 123 (QEAKEQEENEEAKSGED) are compositionally biased toward basic and acidic residues. Serine 120 bears the Phosphoserine; by BARK1, CaMK2 and CK2 mark.

Belongs to the synuclein family. As to quaternary structure, may be a centrosome-associated protein. Interacts with MYOC; affects its secretion and its aggregation. Post-translationally, phosphorylated. Phosphorylation by GRK5 appears to occur on residues distinct from the residue phosphorylated by other kinases. Highly expressed in brain, particularly in the substantia nigra. Also expressed in the corpus callosum, heart, skeletal muscle, ovary, testis, colon and spleen. Weak expression in pancreas, kidney and lung. Expressed predominantly in the cell bodies and axons of primary sensory neurons, sympathetic neurons and motoneurons.

The protein resides in the cytoplasm. Its subcellular location is the perinuclear region. It localises to the cytoskeleton. The protein localises to the microtubule organizing center. It is found in the centrosome. The protein resides in the spindle. Plays a role in neurofilament network integrity. May be involved in modulating axonal architecture during development and in the adult. In vitro, increases the susceptibility of neurofilament-H to calcium-dependent proteases. May also function in modulating the keratin network in skin. Activates the MAPK and Elk-1 signal transduction pathway. The protein is Gamma-synuclein (Sncg) of Mus musculus (Mouse).